The sequence spans 492 residues: 2-succinylbenzoate--CoA ligase (492 aa).

This sequence belongs to the ATP-dependent AMP-binding enzyme family. MenE subfamily.

The enzyme catalyses 2-succinylbenzoate + ATP + CoA = 2-succinylbenzoyl-CoA + AMP + diphosphate. Its pathway is quinol/quinone metabolism; 1,4-dihydroxy-2-naphthoate biosynthesis; 1,4-dihydroxy-2-naphthoate from chorismate: step 5/7. It participates in quinol/quinone metabolism; menaquinone biosynthesis. Its function is as follows. Converts 2-succinylbenzoate (OSB) to 2-succinylbenzoyl-CoA (OSB-CoA). This Staphylococcus aureus (strain bovine RF122 / ET3-1) protein is 2-succinylbenzoate--CoA ligase.